A 238-amino-acid polypeptide reads, in one-letter code: uncharacterized protein (238 aa).

The next 7 membrane-spanning stretches (helical) occupy residues 15-37, 50-69, 79-96, 101-118, 128-150, 163-183, and 203-225; these read FGAL…VLLP, ARAG…CGTL, LPFH…LYFI, IFFN…VAVL, ILYA…FSLL, CAVL…RRLG, and FFVY…YLPF.

The protein localises to the cell membrane. This is an uncharacterized protein from Treponema pallidum (strain Nichols).